We begin with the raw amino-acid sequence, 141 residues long: Lutropin subunit beta (141 aa).

The first 20 residues, 1 to 20 (MEMLQGLLLWLLLNVGGVWA), serve as a signal peptide directing secretion. Disulfide bonds link cysteine 29/cysteine 77, cysteine 43/cysteine 92, cysteine 46/cysteine 130, cysteine 54/cysteine 108, cysteine 58/cysteine 110, and cysteine 113/cysteine 120. N-linked (GlcNAc...) asparagine glycosylation is present at asparagine 33.

It belongs to the glycoprotein hormones subunit beta family. As to quaternary structure, heterodimer of a common alpha chain and a unique beta chain which confers biological specificity to thyrotropin, lutropin, follitropin and gonadotropin.

It is found in the secreted. Its function is as follows. Promotes spermatogenesis and ovulation by stimulating the testes and ovaries to synthesize steroids. The chain is Lutropin subunit beta (LHB) from Ailurus fulgens (Himalayan red panda).